The primary structure comprises 103 residues: Histone H4 (103 aa).

A compositionally biased stretch (gly residues) spans 1 to 14 (MTGRGKGGKGLGKG). Residues 1-20 (MTGRGKGGKGLGKGGAKRHR) are disordered. N6-acetyl-N6-methyllysine; alternate occurs at positions 6 and 13. Residues 17-21 (KRHRK) mediate DNA binding.

The protein belongs to the histone H4 family. In terms of assembly, the nucleosome is a histone octamer containing two molecules each of H2A, H2B, H3 and H4 assembled in one H3-H4 heterotetramer and two H2A-H2B heterodimers. The octamer wraps approximately 147 bp of DNA.

The protein resides in the nucleus. The protein localises to the chromosome. Its function is as follows. Core component of nucleosome. Nucleosomes wrap and compact DNA into chromatin, limiting DNA accessibility to the cellular machineries which require DNA as a template. Histones thereby play a central role in transcription regulation, DNA repair, DNA replication and chromosomal stability. DNA accessibility is regulated via a complex set of post-translational modifications of histones, also called histone code, and nucleosome remodeling. This is Histone H4 from Trichogramma cacaeciae (Moth egg parasite).